Here is a 270-residue protein sequence, read N- to C-terminus: Putative carboxymethylenebutenolidase (270 aa).

Active-site residues include cysteine 147, aspartate 204, and histidine 236.

This sequence belongs to the dienelactone hydrolase family.

The enzyme catalyses 2-(5-oxo-2,5-dihydrofuran-2-ylidene)acetate + H2O = 4-oxohex-2-enedioate + H(+). The protein is Putative carboxymethylenebutenolidase (ysgA) of Salmonella typhimurium (strain LT2 / SGSC1412 / ATCC 700720).